Consider the following 172-residue polypeptide: 6,7-dimethyl-8-ribityllumazine synthase (172 aa).

Residues Phe24, 58–60 (ALE), and 82–84 (AVI) each bind 5-amino-6-(D-ribitylamino)uracil. 87 to 88 (ET) contacts (2S)-2-hydroxy-3-oxobutyl phosphate. His90 serves as the catalytic Proton donor. Asn115 serves as a coordination point for 5-amino-6-(D-ribitylamino)uracil. Residue Arg129 participates in (2S)-2-hydroxy-3-oxobutyl phosphate binding. The tract at residues 150–172 (ALDQLGDDDEDEEEDEDDEEERA) is disordered. A compositionally biased stretch (acidic residues) spans 154–172 (LGDDDEDEEEDEDDEEERA).

It belongs to the DMRL synthase family.

The enzyme catalyses (2S)-2-hydroxy-3-oxobutyl phosphate + 5-amino-6-(D-ribitylamino)uracil = 6,7-dimethyl-8-(1-D-ribityl)lumazine + phosphate + 2 H2O + H(+). The protein operates within cofactor biosynthesis; riboflavin biosynthesis; riboflavin from 2-hydroxy-3-oxobutyl phosphate and 5-amino-6-(D-ribitylamino)uracil: step 1/2. Its function is as follows. Catalyzes the formation of 6,7-dimethyl-8-ribityllumazine by condensation of 5-amino-6-(D-ribitylamino)uracil with 3,4-dihydroxy-2-butanone 4-phosphate. This is the penultimate step in the biosynthesis of riboflavin. This Burkholderia multivorans (strain ATCC 17616 / 249) protein is 6,7-dimethyl-8-ribityllumazine synthase.